A 276-amino-acid chain; its full sequence is MEVKPLKKLRLYGFNNLTKTLSFNMYDICYAKTPEHRDAYIQYIDEEYNAQRLTSIVTEVARIVGANILNIAKQDYDPQGASVTMLIAEEHLGPENPDNDPFSPVYTDKEGPLPDAVVAHLDKSHITVHTYPESHPHGGISTFRADIDVSTCGQISPLKALNFLIESFAPDIIVADYRVRGFTRDVDGKKVFIDHKINSIQNYVDRKYRDLYQMIDVTVFQEYIFHTKMILKDFDLDNYLFGTAKKELSINDKRKIKQRLKKEMAEIFYGKNMPRI.

The active-site Schiff-base intermediate with substrate; via pyruvic acid is the Ser124. A Pyruvic acid (Ser); by autocatalysis modification is found at Ser124. The active-site Proton acceptor; for processing activity is His129. Residue Cys152 is the Proton donor; for catalytic activity of the active site.

Belongs to the prokaryotic AdoMetDC family. Type 2 subfamily. Heterooctamer of four alpha and four beta chains arranged as a tetramer of alpha/beta heterodimers. The cofactor is pyruvate. Is synthesized initially as an inactive proenzyme. Formation of the active enzyme involves a self-maturation process in which the active site pyruvoyl group is generated from an internal serine residue via an autocatalytic post-translational modification. Two non-identical subunits are generated from the proenzyme in this reaction, and the pyruvate is formed at the N-terminus of the alpha chain, which is derived from the carboxyl end of the proenzyme. The post-translation cleavage follows an unusual pathway, termed non-hydrolytic serinolysis, in which the side chain hydroxyl group of the serine supplies its oxygen atom to form the C-terminus of the beta chain, while the remainder of the serine residue undergoes an oxidative deamination to produce ammonia and the pyruvoyl group blocking the N-terminus of the alpha chain.

The catalysed reaction is S-adenosyl-L-methionine + H(+) = S-adenosyl 3-(methylsulfanyl)propylamine + CO2. Its pathway is amine and polyamine biosynthesis; S-adenosylmethioninamine biosynthesis; S-adenosylmethioninamine from S-adenosyl-L-methionine: step 1/1. Functionally, catalyzes the decarboxylation of S-adenosylmethionine to S-adenosylmethioninamine (dcAdoMet), the propylamine donor required for the synthesis of the polyamines spermine and spermidine from the diamine putrescine. This Desulfitobacterium hafniense (strain DSM 10664 / DCB-2) protein is S-adenosylmethionine decarboxylase proenzyme.